The following is a 583-amino-acid chain: Radixin (583 aa).

In terms of domain architecture, FERM spans 5–295; it reads INVRVTTMDA…GNHELYMRRR (291 aa). 60 to 63 contributes to the a 1,2-diacyl-sn-glycero-3-phospho-(1D-myo-inositol) binding site; the sequence is KLNK. N6-succinyllysine is present on lysine 83. Residue lysine 278 coordinates a 1,2-diacyl-sn-glycero-3-phospho-(1D-myo-inositol). Disordered stretches follow at residues 309-336, 374-407, and 460-526; these read AREE…AEKE, ELDQ…AKQA, and KEEL…RVKK. Positions 374–400 are enriched in basic and acidic residues; that stretch reads ELDQERKRAKEEAERLEKERQAAEEAK. Residues 469–480 are compositionally biased toward pro residues; the sequence is APPPPPPPPVIP. Composition is skewed to basic and acidic residues over residues 483 to 492 and 506 to 525; these read ENEHDEHDEN and MNHR…ERVK. Threonine 564 bears the Phosphothreonine; by ROCK2 mark.

In terms of assembly, interacts with CPNE1 (via VWFA domain) and CPNE4 (via VWFA domain). Binds NHERF1. Interacts with NHERF1, NHERF2, LAYN, MME/NEP and ICAM2. Interacts (via FERM domain) with SPN/CD43 cytoplasmic tail. Interacts with CD44. Interacts with CLIC5; may work together in a complex which also includes EZR and MYO6 to stabilize linkages between the plasma membrane and subjacent actin cytoskeleton at the base of stereocilia. Phosphorylated by tyrosine-protein kinases. Phosphorylation by ROCK2 suppresses the head-to-tail association of the N-terminal and C-terminal halves resulting in an opened conformation which is capable of actin and membrane-binding.

Its subcellular location is the cell membrane. It is found in the cytoplasm. The protein localises to the cytoskeleton. The protein resides in the cleavage furrow. It localises to the cell projection. Its subcellular location is the microvillus. It is found in the stereocilium. A head-to-tail association, of the N-terminal and C-terminal halves results in a closed conformation (inactive form) which is incapable of actin or membrane-binding. Probably plays a crucial role in the binding of the barbed end of actin filaments to the plasma membrane. This chain is Radixin (RDX), found in Bos taurus (Bovine).